A 175-amino-acid polypeptide reads, in one-letter code: Arginine repressor (175 aa).

Positions 1 to 23 (MSVSTPERGGAEQGKGPAIARTR) are disordered.

The protein belongs to the ArgR family.

Its subcellular location is the cytoplasm. Its pathway is amino-acid biosynthesis; L-arginine biosynthesis [regulation]. Its function is as follows. Regulates arginine biosynthesis genes. The polypeptide is Arginine repressor (Nocardia farcinica (strain IFM 10152)).